The following is a 285-amino-acid chain: Protease HtpX homolog (285 aa).

The next 2 membrane-spanning stretches (helical) occupy residues 7 to 27 (TAMLMAAITALFIVIGGMIGG) and 30 to 50 (GMTIALLFALGMNFFSYWFSD). His131 contributes to the Zn(2+) binding site. Residue Glu132 is part of the active site. Residue His135 coordinates Zn(2+). 2 helical membrane passes run 146–166 (ITATMAGAISALANFAMFFGG) and 177–197 (IAGIAVALLAPIAGALIQMAI). Glu202 provides a ligand contact to Zn(2+).

Belongs to the peptidase M48B family. Zn(2+) serves as cofactor.

It is found in the cell inner membrane. This chain is Protease HtpX homolog, found in Burkholderia cenocepacia (strain HI2424).